Here is a 136-residue protein sequence, read N- to C-terminus: Ribonuclease P protein component (136 aa).

A disordered region spans residues 116–136 (RPQRAAAKGSAGTTQKGTPRA). Over residues 126–136 (AGTTQKGTPRA) the composition is skewed to polar residues.

Belongs to the RnpA family. In terms of assembly, consists of a catalytic RNA component (M1 or rnpB) and a protein subunit.

The catalysed reaction is Endonucleolytic cleavage of RNA, removing 5'-extranucleotides from tRNA precursor.. In terms of biological role, RNaseP catalyzes the removal of the 5'-leader sequence from pre-tRNA to produce the mature 5'-terminus. It can also cleave other RNA substrates such as 4.5S RNA. The protein component plays an auxiliary but essential role in vivo by binding to the 5'-leader sequence and broadening the substrate specificity of the ribozyme. The chain is Ribonuclease P protein component from Pseudarthrobacter chlorophenolicus (strain ATCC 700700 / DSM 12829 / CIP 107037 / JCM 12360 / KCTC 9906 / NCIMB 13794 / A6) (Arthrobacter chlorophenolicus).